Here is a 189-residue protein sequence, read N- to C-terminus: Apolipoprotein D (189 aa).

An N-terminal signal peptide occupies residues methionine 1 to glycine 20. Glutamine 21 is subject to Pyrrolidone carboxylic acid. Cystine bridges form between cysteine 28-cysteine 134 and cysteine 61-cysteine 185. Residues asparagine 65 and asparagine 98 are each glycosylated (N-linked (GlcNAc...) asparagine).

Belongs to the calycin superfamily. Lipocalin family. Homodimer.

It localises to the secreted. APOD occurs in the macromolecular complex with lecithin-transport and binding of bilin. Appears to be able to transport a variety of ligands in a number of different contexts. The protein is Apolipoprotein D (APOD) of Cavia porcellus (Guinea pig).